Consider the following 265-residue polypeptide: uncharacterized protein (265 aa).

The first 23 residues, 1–23 (MNYFRILYCSVLLFFSFFSCTSA), serve as a signal peptide directing secretion. One can recognise a NodB homology domain in the interval 67-248 (KEIYLTFDNG…TLKQQGYTFK (182 aa)).

Belongs to the polysaccharide deacetylase family.

This is an uncharacterized protein from Geobacillus stearothermophilus (Bacillus stearothermophilus).